Consider the following 170-residue polypeptide: Ribosome maturation factor RimM (170 aa).

Residues proline 98 to phenylalanine 170 form the PRC barrel domain.

This sequence belongs to the RimM family. As to quaternary structure, binds ribosomal protein uS19.

The protein resides in the cytoplasm. Its function is as follows. An accessory protein needed during the final step in the assembly of 30S ribosomal subunit, possibly for assembly of the head region. Essential for efficient processing of 16S rRNA. May be needed both before and after RbfA during the maturation of 16S rRNA. It has affinity for free ribosomal 30S subunits but not for 70S ribosomes. The chain is Ribosome maturation factor RimM from Xylella fastidiosa (strain 9a5c).